The sequence spans 258 residues: tRNA pseudouridine synthase A (258 aa).

Asp52 functions as the Nucleophile in the catalytic mechanism. Tyr110 contributes to the substrate binding site.

The protein belongs to the tRNA pseudouridine synthase TruA family. Homodimer.

The catalysed reaction is uridine(38/39/40) in tRNA = pseudouridine(38/39/40) in tRNA. Functionally, formation of pseudouridine at positions 38, 39 and 40 in the anticodon stem and loop of transfer RNAs. This is tRNA pseudouridine synthase A from Francisella tularensis subsp. holarctica (strain FTNF002-00 / FTA).